The primary structure comprises 30 residues: MLDIISLGWGSLLAIFSFSIALVVWGRNGF.

The helical transmembrane segment at 4 to 24 (IISLGWGSLLAIFSFSIALVV) threads the bilayer.

This sequence belongs to the PetN family. As to quaternary structure, the 4 large subunits of the cytochrome b6-f complex are cytochrome b6, subunit IV (17 kDa polypeptide, PetD), cytochrome f and the Rieske protein, while the 4 small subunits are PetG, PetL, PetM and PetN. The complex functions as a dimer.

The protein resides in the plastid. Its subcellular location is the chloroplast thylakoid membrane. Component of the cytochrome b6-f complex, which mediates electron transfer between photosystem II (PSII) and photosystem I (PSI), cyclic electron flow around PSI, and state transitions. This Gracilaria tenuistipitata var. liui (Red alga) protein is Cytochrome b6-f complex subunit 8.